The primary structure comprises 324 residues: Glyoxylate/hydroxypyruvate reductase B (324 aa).

Catalysis depends on residues Arg-237 and Glu-266. His-285 (proton donor) is an active-site residue.

This sequence belongs to the D-isomer specific 2-hydroxyacid dehydrogenase family. GhrB subfamily. Homodimer.

The protein localises to the cytoplasm. The catalysed reaction is glycolate + NADP(+) = glyoxylate + NADPH + H(+). It catalyses the reaction (R)-glycerate + NAD(+) = 3-hydroxypyruvate + NADH + H(+). The enzyme catalyses (R)-glycerate + NADP(+) = 3-hydroxypyruvate + NADPH + H(+). In terms of biological role, catalyzes the NADPH-dependent reduction of glyoxylate and hydroxypyruvate into glycolate and glycerate, respectively. This is Glyoxylate/hydroxypyruvate reductase B from Escherichia coli O17:K52:H18 (strain UMN026 / ExPEC).